A 254-amino-acid chain; its full sequence is Coenzyme F420:L-glutamate ligase (254 aa).

Residues 11–14, 40–41, and K45 contribute to the GTP site; these read IPLI and ST. D109 is an a divalent metal cation binding site. A GTP-binding site is contributed by N112. Residues D150, T151, and E208 each contribute to the a divalent metal cation site. 206 to 213 lines the GTP pocket; sequence MGEGAGGI.

The protein belongs to the CofE family. As to quaternary structure, homodimer. It depends on Mg(2+) as a cofactor. Requires Mn(2+) as cofactor. The cofactor is K(+).

It carries out the reaction oxidized coenzyme F420-0 + GTP + L-glutamate = oxidized coenzyme F420-1 + GDP + phosphate + H(+). The catalysed reaction is oxidized coenzyme F420-1 + GTP + L-glutamate = oxidized coenzyme F420-2 + GDP + phosphate + H(+). The protein operates within cofactor biosynthesis; coenzyme F420 biosynthesis. Functionally, catalyzes the GTP-dependent successive addition of two or more gamma-linked L-glutamates to the L-lactyl phosphodiester of 7,8-didemethyl-8-hydroxy-5-deazariboflavin (F420-0) to form coenzyme F420-0-glutamyl-glutamate (F420-2) or polyglutamated F420 derivatives. This is Coenzyme F420:L-glutamate ligase from Methanosarcina acetivorans (strain ATCC 35395 / DSM 2834 / JCM 12185 / C2A).